Consider the following 269-residue polypeptide: MCLVNEFVSNSNMKPALNVSGDEKELILQLRRYLEEKLTYLLDQNGTVSIGVSGGSMPRVFSKAILSLPQEQLNWKRIRIFMVDERNVDLDSEESNQGEYLRLFPNELRDVFVPMQIFKDPCLTAQHYEISLRKYLLPEQLNNTARFDILFLGVGPDGHTASIFPGKERLEKITELNWVSVITDSPKPPPSRITLTLQTLQHAKNVAFIICGKQKAEIVRGICDRDQKYPAAQARPFNDKLTLFLDEDAATGVPDRDSSDSDSPPPFDG.

The segment at 248-269 (DAATGVPDRDSSDSDSPPPFDG) is disordered.

This sequence belongs to the glucosamine/galactosamine-6-phosphate isomerase family. 6-phosphogluconolactonase subfamily.

The protein localises to the nucleus. It catalyses the reaction 6-phospho-D-glucono-1,5-lactone + H2O = 6-phospho-D-gluconate + H(+). It functions in the pathway carbohydrate degradation; pentose phosphate pathway; D-ribulose 5-phosphate from D-glucose 6-phosphate (oxidative stage): step 2/3. Its function is as follows. Hydrolysis of 6-phosphogluconolactone to 6-phosphogluconate. In Caenorhabditis elegans, this protein is Putative 6-phosphogluconolactonase.